Consider the following 417-residue polypeptide: Serine hydroxymethyltransferase (417 aa).

(6S)-5,6,7,8-tetrahydrofolate-binding positions include Leu121 and 125–127 (GHL). Lys229 is modified (N6-(pyridoxal phosphate)lysine). 355 to 357 (SPF) is a binding site for (6S)-5,6,7,8-tetrahydrofolate.

The protein belongs to the SHMT family. As to quaternary structure, homodimer. The cofactor is pyridoxal 5'-phosphate.

It is found in the cytoplasm. The catalysed reaction is (6R)-5,10-methylene-5,6,7,8-tetrahydrofolate + glycine + H2O = (6S)-5,6,7,8-tetrahydrofolate + L-serine. The protein operates within one-carbon metabolism; tetrahydrofolate interconversion. It functions in the pathway amino-acid biosynthesis; glycine biosynthesis; glycine from L-serine: step 1/1. Catalyzes the reversible interconversion of serine and glycine with tetrahydrofolate (THF) serving as the one-carbon carrier. This reaction serves as the major source of one-carbon groups required for the biosynthesis of purines, thymidylate, methionine, and other important biomolecules. Also exhibits THF-independent aldolase activity toward beta-hydroxyamino acids, producing glycine and aldehydes, via a retro-aldol mechanism. This Edwardsiella ictaluri (strain 93-146) protein is Serine hydroxymethyltransferase.